The sequence spans 168 residues: Small ribosomal subunit protein uS5 (168 aa).

Residues 12–75 (YQEKLVSVTR…DQAKKNMVYI (64 aa)) enclose the S5 DRBM domain.

It belongs to the universal ribosomal protein uS5 family. Part of the 30S ribosomal subunit. Contacts proteins S4 and S8.

Its function is as follows. With S4 and S12 plays an important role in translational accuracy. Located at the back of the 30S subunit body where it stabilizes the conformation of the head with respect to the body. The polypeptide is Small ribosomal subunit protein uS5 (Legionella pneumophila (strain Paris)).